Here is a 277-residue protein sequence, read N- to C-terminus: Undecaprenyl-diphosphatase (277 aa).

5 helical membrane passes run 83–103 (FALN…VFAS), 109–129 (LFAP…ILWI), 188–208 (ATEF…VYSV), 218–238 (ADIP…FLCV), and 256–276 (YRIV…VVWA).

It belongs to the UppP family.

It localises to the cell inner membrane. The catalysed reaction is di-trans,octa-cis-undecaprenyl diphosphate + H2O = di-trans,octa-cis-undecaprenyl phosphate + phosphate + H(+). Its function is as follows. Catalyzes the dephosphorylation of undecaprenyl diphosphate (UPP). Confers resistance to bacitracin. The polypeptide is Undecaprenyl-diphosphatase (Janthinobacterium sp. (strain Marseille) (Minibacterium massiliensis)).